The following is a 516-amino-acid chain: Maturase K (516 aa).

This sequence belongs to the intron maturase 2 family. MatK subfamily.

It is found in the plastid. It localises to the chloroplast. Functionally, usually encoded in the trnK tRNA gene intron. Probably assists in splicing its own and other chloroplast group II introns. The polypeptide is Maturase K (Medeola virginiana (Indian cucumber root)).